We begin with the raw amino-acid sequence, 63 residues long: Large ribosomal subunit protein uL29 (63 aa).

Belongs to the universal ribosomal protein uL29 family.

This Pectobacterium atrosepticum (strain SCRI 1043 / ATCC BAA-672) (Erwinia carotovora subsp. atroseptica) protein is Large ribosomal subunit protein uL29.